Consider the following 316-residue polypeptide: Daunorubicin resistance ATP-binding protein DrrA3 (316 aa).

Positions 6 to 236 (ITVDGAEKRY…TGGDRIDVVL (231 aa)) constitute an ABC transporter domain. 38-45 (GPNGAGKT) provides a ligand contact to ATP.

Belongs to the ABC transporter superfamily. Drug exporter-1 (DrugE1) (TC 3.A.1.105) family. In terms of assembly, the complex is probably composed of two ATP-binding proteins (DrrA3) and two transmembrane proteins (DrrB3).

Its subcellular location is the cell membrane. The catalysed reaction is daunorubicin(in) + ATP + H2O = daunorubicin(out) + ADP + phosphate + H(+). Part of the ABC transporter complex DrrA3B3 involved in daunorubicin efflux. Responsible for energy coupling to the transport system. Confers self-resistance to daunorubicin, an antibiotic produced by S.coeruleorubidus. The efficiency of DrrA3B3 to export daunorubicin is probably lower than that of DrrA1B1 or DrrA2B2. The chain is Daunorubicin resistance ATP-binding protein DrrA3 from Streptomyces coeruleorubidus.